We begin with the raw amino-acid sequence, 110 residues long: Heat shock protein Hsp-12.2 (110 aa).

The 96-residue stretch at 15–110 (DWPLQHNDGV…VLTITASKKA (96 aa)) folds into the sHSP domain.

The protein belongs to the small heat shock protein (HSP20) family.

The chain is Heat shock protein Hsp-12.2 (hsp-12.2) from Caenorhabditis elegans.